A 204-amino-acid chain; its full sequence is Holliday junction branch migration complex subunit RuvA (204 aa).

The tract at residues 1-64 (MIGRLRGTLI…EDAQLLYGFN (64 aa)) is domain I. The tract at residues 65–143 (TVSERALFRE…GWGAGDLFTP (79 aa)) is domain II. Residues 144–155 (ATDAAPVDSTPV) are flexible linker. Positions 156-204 (IAQNAQEEAMSALLALGYKPPQASKAVSQVAKAGMSSEELIREALKSMV) are domain III.

The protein belongs to the RuvA family. In terms of assembly, homotetramer. Forms an RuvA(8)-RuvB(12)-Holliday junction (HJ) complex. HJ DNA is sandwiched between 2 RuvA tetramers; dsDNA enters through RuvA and exits via RuvB. An RuvB hexamer assembles on each DNA strand where it exits the tetramer. Each RuvB hexamer is contacted by two RuvA subunits (via domain III) on 2 adjacent RuvB subunits; this complex drives branch migration. In the full resolvosome a probable DNA-RuvA(4)-RuvB(12)-RuvC(2) complex forms which resolves the HJ.

It localises to the cytoplasm. Functionally, the RuvA-RuvB-RuvC complex processes Holliday junction (HJ) DNA during genetic recombination and DNA repair, while the RuvA-RuvB complex plays an important role in the rescue of blocked DNA replication forks via replication fork reversal (RFR). RuvA specifically binds to HJ cruciform DNA, conferring on it an open structure. The RuvB hexamer acts as an ATP-dependent pump, pulling dsDNA into and through the RuvAB complex. HJ branch migration allows RuvC to scan DNA until it finds its consensus sequence, where it cleaves and resolves the cruciform DNA. In Vibrio cholerae serotype O1 (strain ATCC 39541 / Classical Ogawa 395 / O395), this protein is Holliday junction branch migration complex subunit RuvA.